Here is a 184-residue protein sequence, read N- to C-terminus: Peptide deformylase (184 aa).

Fe cation-binding residues include cysteine 111 and histidine 154. Glutamate 155 is a catalytic residue. A Fe cation-binding site is contributed by histidine 158.

The protein belongs to the polypeptide deformylase family. Fe(2+) is required as a cofactor.

The catalysed reaction is N-terminal N-formyl-L-methionyl-[peptide] + H2O = N-terminal L-methionyl-[peptide] + formate. In terms of biological role, removes the formyl group from the N-terminal Met of newly synthesized proteins. Requires at least a dipeptide for an efficient rate of reaction. N-terminal L-methionine is a prerequisite for activity but the enzyme has broad specificity at other positions. This is Peptide deformylase from Macrococcus caseolyticus (strain JCSC5402) (Macrococcoides caseolyticum).